A 316-amino-acid chain; its full sequence is MRLETQALVPYPVRFDRSHHDALVVLGATATGKTALAVALAQKYQGEIISADSRQVYRGLDVGTGKDLALYGSVPYHLIDVCDPYEEYNVFRFQQAVYGIVPSILRAHKVPIIVGGTGLYLDAVLRQYALVPVERNQALRASLRGASLSHMRAVYFSLKDSHAVHNKTDLEDPARLMRAIEIAVFHATHPELLQQARETRPMMRAKVYGIQYPRSMLRARIRARLEQRIRGGLIEEVAALHKGGVSWQRLEYFGLEYRFTAQYLQGIIATRDEYVDLLFRAISRFAKRQETWFRRMQRLGVKIHWLVHTENGFVLR.

27–34 contributes to the ATP binding site; sequence GATATGKT. Residue 29 to 34 participates in substrate binding; the sequence is TATGKT. The tract at residues 52-55 is interaction with substrate tRNA; sequence DSRQ.

The protein belongs to the IPP transferase family. As to quaternary structure, monomer. It depends on Mg(2+) as a cofactor.

It carries out the reaction adenosine(37) in tRNA + dimethylallyl diphosphate = N(6)-dimethylallyladenosine(37) in tRNA + diphosphate. Catalyzes the transfer of a dimethylallyl group onto the adenine at position 37 in tRNAs that read codons beginning with uridine, leading to the formation of N6-(dimethylallyl)adenosine (i(6)A). This chain is tRNA dimethylallyltransferase, found in Treponema pallidum (strain Nichols).